A 1328-amino-acid chain; its full sequence is Peroxidasin homolog pxn-2 (1328 aa).

The signal sequence occupies residues 1–16; the sequence is MLLEFLLLIGISLSTA. In terms of domain architecture, LRRNT spans 17–45; that stretch reads CPSECRCAGLDVHCEGKNLTAIPGHIPIA. An N-linked (GlcNAc...) asparagine glycan is attached at Asn-34. LRR repeat units lie at residues 42 to 66, 67 to 90, 92 to 114, 116 to 137, 138 to 161, and 164 to 191; these read IPIATTNLYFSNNLLNSLSKSNFQA, LPNLQYLDLSNNSIRDIEETLLDS, PGLKYLDLSWNKIRYVPKLSTAP, ALVSLNLVHNEISRLDNDLVSH, SPYMQTFLIQRNRIQSLPHDFFNS, and VPTLKTVKMAGNPWSCDCRMVNVKQFAD. Residue Asn-77 is glycosylated (N-linked (GlcNAc...) asparagine). Asn-220 carries an N-linked (GlcNAc...) asparagine glycan. The tract at residues 305–332 is disordered; the sequence is KKMQASSSTEPPITTTTMEPMTTSTMDS. Positions 310 to 332 are enriched in low complexity; it reads SSSTEPPITTTTMEPMTTSTMDS. Ig-like C2-type domains are found at residues 346-438 and 445-532; these read PEID…FSVS and PVII…ANLL. Cys-373 and Cys-422 form a disulfide bridge. Residues Asn-403 and Asn-455 are each glycosylated (N-linked (GlcNAc...) asparagine). Residues Cys-466 and Cys-516 are joined by a disulfide bond. An N-linked (GlcNAc...) asparagine glycan is attached at Asn-630. Cys-660 and Cys-676 are joined by a disulfide. Asp-754 is a binding site for heme b. His-755 serves as the catalytic Proton acceptor. A Ca(2+)-binding site is contributed by Asp-756. Disulfide bonds link Cys-775–Cys-785 and Cys-779–Cys-807. The N-linked (GlcNAc...) asparagine glycan is linked to Asn-776. Ca(2+) is bound by residues Thr-839, Tyr-841, Asp-843, and Ser-845. N-linked (GlcNAc...) asparagine glycosylation is present at Asn-894. Residues Glu-913 and His-1008 each coordinate heme b. One copy of the LRR 7 repeat lies at 1085–1109; it reads ALDLAALNIQRGRDHGLPSWTEYRK. Cystine bridges form between Cys-1111-Cys-1168 and Cys-1209-Cys-1236. Residues Asn-1112 and Asn-1128 are each glycosylated (N-linked (GlcNAc...) asparagine). Residues 1204-1225 form an LRR 8 repeat; the sequence is LSKIICTNGDDIDRIQRDIFVY. N-linked (GlcNAc...) asparagine glycosylation is present at Asn-1228. The segment at 1266-1297 is disordered; sequence IGGDEKAKRRKRRHHHSKKSCHDKGKRRKSGD. Basic residues predominate over residues 1273-1295; that stretch reads KRRKRRHHHSKKSCHDKGKRRKS. Asn-1300 carries N-linked (GlcNAc...) asparagine glycosylation.

It belongs to the peroxidase family. XPO subfamily. Ca(2+) is required as a cofactor. Requires heme b as cofactor. As to expression, expressed in vulval muscles and in some neurons including PVQ. Expressed in the hypodermis and in coelomocytes.

It localises to the secreted. Its subcellular location is the extracellular space. It is found in the extracellular matrix. The protein resides in the basement membrane. The enzyme catalyses L-lysyl-[collagen] + L-methionyl-[collagen] + H2O2 = [collagen]-L-lysyl-N-S-L-methionyl-[collagen] + 2 H2O + H(+). The catalysed reaction is bromide + H2O2 = hypobromite + H2O. It catalyses the reaction L-lysyl-[collagen] + L-methionyl-[collagen] + hypobromite = [collagen]-L-lysyl-N-S-L-methionyl-[collagen] + bromide + H2O + H(+). It carries out the reaction L-tyrosyl-[protein] + bromide + H2O2 + H(+) = 3-bromo-L-tyrosyl-[protein] + 2 H2O. The enzyme catalyses hypobromite + L-tyrosyl-[protein] + H(+) = 3-bromo-L-tyrosyl-[protein] + H2O. Catalyzes the two-electron oxidation of bromide by hydrogen peroxide and generates hypobromite as a reactive intermediate which mediates the formation of sulfilimine cross-links between methionine and hydroxylysine residues within an uncross-linked collagen IV/COL4A1 NC1 hexamer. Required for embryonic morphogenesis playing a role in epidermal elongation at the twofold stage of embryonic development. Required post-embryonically for basement membrane integrity and muscle-epidermal attachments, and specifically in the function of basement membrane components such as the type IV collagens. May have a role in inhibiting axon regeneration. May functionally antagonize the peroxidasin pxn-1. This Caenorhabditis elegans protein is Peroxidasin homolog pxn-2.